We begin with the raw amino-acid sequence, 193 residues long: Acyl-homoserine-lactone synthase (193 aa).

It belongs to the autoinducer synthase family.

The catalysed reaction is a fatty acyl-[ACP] + S-adenosyl-L-methionine = an N-acyl-L-homoserine lactone + S-methyl-5'-thioadenosine + holo-[ACP] + H(+). In terms of biological role, required for the synthesis of OHHL (N-(3-oxohexanoyl)-L-homoserine lactone) also known as VAI or N-(beta-ketocaproyl)homoserine lactone or 3-oxo-N-(tetrahydro-2-oxo-3-furanyl)-hexanamide, an autoinducer molecule which binds to LuxR and thus acts in bioluminescence regulation. The polypeptide is Acyl-homoserine-lactone synthase (luxI) (Aliivibrio fischeri (strain ATCC 700601 / ES114) (Vibrio fischeri)).